The chain runs to 541 residues: T-complex protein 1 subunit epsilon (541 aa).

A2 bears the N-acetylalanine mark. A Glycyl lysine isopeptide (Lys-Gly) (interchain with G-Cter in SUMO2) cross-link involves residue K20. A Phosphoserine modification is found at S26. G53 lines the ADP pocket. Residue G53 participates in ATP binding. D104 provides a ligand contact to Mg(2+). 4 residues coordinate ADP: G105, T106, T107, and S175. ATP-binding residues include T106 and T107. Residues K210, K214, K265, K275, and K279 each participate in a glycyl lysine isopeptide (Lys-Gly) (interchain with G-Cter in SUMO2) cross-link. A Phosphoserine modification is found at S346. Residue K392 forms a Glycyl lysine isopeptide (Lys-Gly) (interchain with G-Cter in SUMO2) linkage. Residues G422, D492, E508, and K513 each contribute to the ADP site. G422 contributes to the ATP binding site. Residue S539 is modified to Phosphoserine.

It belongs to the TCP-1 chaperonin family. As to quaternary structure, component of the chaperonin-containing T-complex (TRiC), a hexadecamer composed of two identical back-to-back stacked rings enclosing a protein folding chamber. Each ring is made up of eight different subunits: TCP1/CCT1, CCT2, CCT3, CCT4, CCT5, CCT6A/CCT6, CCT7, CCT8. Interacts with PACRG. Interacts with DNAAF4. Interacts with DLEC1. Interacts with SPMAP2. Ubiquitinated by the DCX(DCAF12) complex specifically recognizes the diglutamate (Glu-Glu) at the C-terminus, leading to its degradation.

Its subcellular location is the cytoplasm. It localises to the cytoskeleton. It is found in the microtubule organizing center. The protein localises to the centrosome. The enzyme catalyses ATP + H2O = ADP + phosphate + H(+). In terms of biological role, component of the chaperonin-containing T-complex (TRiC), a molecular chaperone complex that assists the folding of actin, tubulin and other proteins upon ATP hydrolysis. The TRiC complex mediates the folding of WRAP53/TCAB1, thereby regulating telomere maintenance. As part of the TRiC complex may play a role in the assembly of BBSome, a complex involved in ciliogenesis regulating transports vesicles to the cilia. This chain is T-complex protein 1 subunit epsilon (CCT5), found in Homo sapiens (Human).